We begin with the raw amino-acid sequence, 47 residues long: uncharacterized protein (47 aa).

Disordered regions lie at residues 1-20 (MSTD…EEWQ) and 25-47 (EKEK…NRKG). Residues 25–40 (EKEKDENNRLFQEQKQ) show a composition bias toward basic and acidic residues.

This is an uncharacterized protein from Dictyostelium discoideum (Social amoeba).